The sequence spans 64 residues: Large ribosomal subunit protein bL35 (64 aa).

2 stretches are compositionally biased toward basic residues: residues 1 to 15 and 23 to 42; these read MPKA…KRFR and VRQK…KRTR. Residues 1–45 are disordered; that stretch reads MPKAKTHSGASKRFRTTGSGKVVRQKANRRHLLEHKPTKRTRRLD.

It belongs to the bacterial ribosomal protein bL35 family.

In Mycolicibacterium vanbaalenii (strain DSM 7251 / JCM 13017 / BCRC 16820 / KCTC 9966 / NRRL B-24157 / PYR-1) (Mycobacterium vanbaalenii), this protein is Large ribosomal subunit protein bL35.